Reading from the N-terminus, the 473-residue chain is MSEDSDMEKAIKETSILEEYSINWTQKLGAGISGPVRVCVKKSTQERFALKILLDRPKARNEVRLHMMCATHPNIVQIIEVFANSVQFPHESSPRARLLIVMEMMEGGELFHRISQHRHFTEKQASQVTKQIALALQHCHLLNIAHRDLKPENLLFKDNSLDAPVKLCDFGFAKVDQGDLMTPQFTPYYVAPQVLEAQRRHQKEKSGIIPTSPTPYTYNKSCDLWSLGVIIYVMLCGYPPFYSKHHSRTIPKDMRKKIMTGSFEFPEEEWSQISEMAKDVVRKLLKVKPEERLTIEGVLDHPWLNSTEALDNVLPSAQLMMDKAVVAGIQQAHAEQLANMRIQDLKVSLKPLHSVNNPILRKRKLLGTKPKDGIYIHDHENGTEDSNVALEKLRDVIAQCILPQAGKGENEDEKLNEVMQEAWKYNRECKLLRDALQSFSWNGRGFTDKVDRLKLAEVVKQVIEEQTLPHEPQ.

The Protein kinase domain maps to 22 to 304 (INWTQKLGAG…IEGVLDHPWL (283 aa)). ATP contacts are provided by residues 28–36 (LGAGISGPV) and Lys-51. Phosphoserine; by PKA is present on Ser-115. The active-site Proton acceptor is the Asp-148. The residue at position 182 (Thr-182) is a Phosphothreonine; by MAPK11, MAPK14, MAPK4, MAPK6 and PKA. Phosphoserine is present on residues Ser-212 and Ser-354. Positions 409 to 440 (ENEDEKLNEVMQEAWKYNRECKLLRDALQSFS) form a coiled coil.

The protein belongs to the protein kinase superfamily. CAMK Ser/Thr protein kinase family. As to quaternary structure, interacts with SQSTM1. Interacts with ERK3/MAPK6 and ERK4/MAPK4 (via FRIEDE motif); the interaction is direct. Interacts with YWHAE; the interaction prevents phosphorylation of HSP27/HSPB1 leading to disrupt F-actin polymerization. Post-translationally, phosphorylated on Thr-182 ERK3/MAPK6 or ERK4/MAPK4; which is the regulatory phosphorylation site and is located on the T-loop/loop 12, leading to activation. Phosphorylation at Thr-182 by p38-alpha/MAPK14, p38-beta/MAPK11 is subject to debate. Phosphorylated at Ser-115 by PKA/PRKACA, leading to localization to the cytoplasm. Autophosphorylated. In terms of tissue distribution, expressed ubiquitously.

The protein resides in the cytoplasm. It is found in the nucleus. It catalyses the reaction L-seryl-[protein] + ATP = O-phospho-L-seryl-[protein] + ADP + H(+). It carries out the reaction L-threonyl-[protein] + ATP = O-phospho-L-threonyl-[protein] + ADP + H(+). Its activity is regulated as follows. Activated following phosphorylation at Thr-182 by p38-alpha/MAPK14, p38-beta/MAPK11, ERK2/MAPK1, ERK3/MAPK6, and ERK4/MAPK4. Activated by stress-related extracellular stimuli; such as H(2)O(2), arsenite, anisomycin TNF alpha and also PMA and the calcium ionophore A23187; but to a lesser extent. In vitro, activated by SQSTM1. Inhibited by diterpenoid alkaloid noroxoaconitine. In terms of biological role, tumor suppressor serine/threonine-protein kinase involved in mTORC1 signaling and post-transcriptional regulation. Phosphorylates FOXO3, ERK3/MAPK6, ERK4/MAPK4, HSP27/HSPB1, p53/TP53 and RHEB. Acts as a tumor suppressor by mediating Ras-induced senescence and phosphorylating p53/TP53. Involved in post-transcriptional regulation of MYC by mediating phosphorylation of FOXO3: phosphorylation of FOXO3 leads to promote nuclear localization of FOXO3, enabling expression of miR-34b and miR-34c, 2 post-transcriptional regulators of MYC that bind to the 3'UTR of MYC transcript and prevent MYC translation. Acts as a negative regulator of mTORC1 signaling by mediating phosphorylation and inhibition of RHEB. Part of the atypical MAPK signaling via its interaction with ERK3/MAPK6 or ERK4/MAPK4: the precise role of the complex formed with ERK3/MAPK6 or ERK4/MAPK4 is still unclear, but the complex follows a complex set of phosphorylation events: upon interaction with atypical MAPK (ERK3/MAPK6 or ERK4/MAPK4), ERK3/MAPK6 (or ERK4/MAPK4) is phosphorylated and then mediates phosphorylation and activation of MAPKAPK5, which in turn phosphorylates ERK3/MAPK6 (or ERK4/MAPK4). Mediates phosphorylation of HSP27/HSPB1 in response to PKA/PRKACA stimulation, inducing F-actin rearrangement. The polypeptide is MAP kinase-activated protein kinase 5 (Mapkapk5) (Mus musculus (Mouse)).